Consider the following 629-residue polypeptide: Arginine--tRNA ligase (629 aa).

The 'HIGH' region signature appears at 128-138 (VNPTKPLHMGH).

It belongs to the class-I aminoacyl-tRNA synthetase family.

The protein localises to the cytoplasm. It carries out the reaction tRNA(Arg) + L-arginine + ATP = L-arginyl-tRNA(Arg) + AMP + diphosphate. The protein is Arginine--tRNA ligase (argS) of Pyrococcus horikoshii (strain ATCC 700860 / DSM 12428 / JCM 9974 / NBRC 100139 / OT-3).